Reading from the N-terminus, the 94-residue chain is Integration host factor subunit beta (94 aa).

The protein belongs to the bacterial histone-like protein family. As to quaternary structure, heterodimer of an alpha and a beta chain.

This protein is one of the two subunits of integration host factor, a specific DNA-binding protein that functions in genetic recombination as well as in transcriptional and translational control. The chain is Integration host factor subunit beta from Escherichia coli (strain UTI89 / UPEC).